The primary structure comprises 441 residues: Amino-acid acetyltransferase (441 aa).

Residues 295–434 (EQVRRATIND…QELYNYQRRS (140 aa)) form the N-acetyltransferase domain.

It belongs to the acetyltransferase family. ArgA subfamily. As to quaternary structure, homohexamer.

It localises to the cytoplasm. The catalysed reaction is L-glutamate + acetyl-CoA = N-acetyl-L-glutamate + CoA + H(+). It participates in amino-acid biosynthesis; L-arginine biosynthesis; N(2)-acetyl-L-ornithine from L-glutamate: step 1/4. The polypeptide is Amino-acid acetyltransferase (Yersinia pseudotuberculosis serotype O:1b (strain IP 31758)).